The following is a 91-amino-acid chain: Large ribosomal subunit protein bL28 (91 aa).

The disordered stretch occupies residues 1–23 (MSRVCELTGKGPMSGNNVSHANN).

This sequence belongs to the bacterial ribosomal protein bL28 family.

The polypeptide is Large ribosomal subunit protein bL28 (Paracoccus denitrificans (strain Pd 1222)).